The following is a 375-amino-acid chain: Patatin-1-Kuras 2 (375 aa).

The N-terminal stretch at 1–11 is a signal peptide; sequence MILATTSSTFA. Residues 20 to 218 form the PNPLA domain; the sequence is LSIDGGGIKG…TVADPALLSV (199 aa). Positions 24–29 match the GXGXXG motif; sequence GGGIKG. Positions 63 to 67 match the GXSXG motif; it reads GTSTG. Serine 65 (nucleophile) is an active-site residue. An N-linked (GlcNAc...) asparagine glycan is attached at asparagine 103. Residue aspartate 204 is the Proton acceptor of the active site. A DGA/G motif is present at residues 204–206; that stretch reads DGA. Residues 349 to 373 adopt a coiled-coil conformation; the sequence is ETYEEALKRFAKLLSDRKKLRANKA.

Belongs to the patatin family. As to expression, tuber.

It is found in the vacuole. Its function is as follows. Probable lipolytic acyl hydrolase (LAH), an activity which is thought to be involved in the response of tubers to pathogens. This Solanum tuberosum (Potato) protein is Patatin-1-Kuras 2 (pat1-k2).